Reading from the N-terminus, the 732-residue chain is Ionotropic receptor 40a (732 aa).

Positions 1-19 (MHKFLALGLLPYLLGLLNS) are cleaved as a signal peptide. N18, N235, and N299 each carry an N-linked (GlcNAc...) asparagine glycan. The Extracellular portion of the chain corresponds to 20–369 (TRLTFIGNDE…RPFKQDIWPH (350 aa)). The helical transmembrane segment at 370–390 (LILTIIFSGPIFYGIIALPYI) threads the bilayer. Topologically, residues 391-465 (WRRRWANSDV…NELHNGYRAK (75 aa)) are cytoplasmic. Residues 466–486 (FLTIVYWIAATYVLADVYSAQ) form a helical membrane-spanning segment. Residues 487 to 688 (LTSQFARPAR…LNLRMLQGAF (202 aa)) are Extracellular-facing. N531 carries an N-linked (GlcNAc...) asparagine glycan. Residues 689 to 709 (IALGVGSLAAGVILLLEIVFI) form a helical membrane-spanning segment. The Cytoplasmic portion of the chain corresponds to 710–732 (KLDQARLWMLCSRLQWIRYDRKV).

It belongs to the glutamate-gated ion channel (TC 1.A.10.1) family. In the antenna, detected in sacculus neurons which innervate the first and second chambers (at protein level).

It is found in the cell membrane. Functionally, integral part of a neural sensory system in the antenna that provides the neural basis for the response to environmental changes in humidity (hygrosensation). Together with Ir25a and Ir93a, mediates the response of the hygrosensory sacculus neurons to changes in relative humidity and is required for dry detection behavior. In Drosophila melanogaster (Fruit fly), this protein is Ionotropic receptor 40a.